Reading from the N-terminus, the 82-residue chain is Small ribosomal subunit protein eS27 (82 aa).

The C4-type zinc-finger motif lies at 37–59; sequence CPGCFTITTVFSHAQTVVICQGC.

This sequence belongs to the eukaryotic ribosomal protein eS27 family. As to quaternary structure, component of the small ribosomal subunit (SSU). Mature N.crassa ribosomes consist of a small (40S) and a large (60S) subunit. The 40S small subunit contains 1 molecule of ribosomal RNA (18S rRNA) and at least 32 different proteins. The large 60S subunit contains 3 rRNA molecules (26S, 5.8S and 5S rRNA) and at least 42 different proteins. It depends on Zn(2+) as a cofactor.

Its subcellular location is the cytoplasm. In terms of biological role, component of the ribosome, a large ribonucleoprotein complex responsible for the synthesis of proteins in the cell. The small ribosomal subunit (SSU) binds messenger RNAs (mRNAs) and translates the encoded message by selecting cognate aminoacyl-transfer RNA (tRNA) molecules. The large subunit (LSU) contains the ribosomal catalytic site termed the peptidyl transferase center (PTC), which catalyzes the formation of peptide bonds, thereby polymerizing the amino acids delivered by tRNAs into a polypeptide chain. The nascent polypeptides leave the ribosome through a tunnel in the LSU and interact with protein factors that function in enzymatic processing, targeting, and the membrane insertion of nascent chains at the exit of the ribosomal tunnel. This Neurospora crassa (strain ATCC 24698 / 74-OR23-1A / CBS 708.71 / DSM 1257 / FGSC 987) protein is Small ribosomal subunit protein eS27 (crp-6).